The chain runs to 496 residues: Palmitoleoyl-protein carboxylesterase NOTUM (496 aa).

An N-terminal signal peptide occupies residues 1-19; sequence MGRGVRVLLLLSLLHCAGG. Residues 21–46 are disordered; the sequence is EGRKTWRRRGQQPPPPPRTEAAPAAG. S81 bears the Phosphoserine; by FAM20C mark. Residue N96 is glycosylated (N-linked (GlcNAc...) asparagine). Active-site charge relay system residues include S232, D340, and H389.

This sequence belongs to the pectinacetylesterase family. Notum subfamily. Rarely expressed in adult normal tissues.

It localises to the secreted. It carries out the reaction [Wnt protein]-O-(9Z)-hexadecenoyl-L-serine + H2O = [Wnt protein]-L-serine + (9Z)-hexadecenoate + H(+). In terms of biological role, carboxylesterase that acts as a key negative regulator of the Wnt signaling pathway by specifically mediating depalmitoleoylation of WNT proteins. Serine palmitoleoylation of WNT proteins is required for efficient binding to frizzled receptors. The protein is Palmitoleoyl-protein carboxylesterase NOTUM of Homo sapiens (Human).